The sequence spans 120 residues: Spermidine export protein MdtJ (120 aa).

Transmembrane regions (helical) follow at residues 1–21, 31–51, 54–74, and 81–101; these read MFYW…TLSM, TGFI…SFAV, IALG…ITLF, and EALS…IALI.

It belongs to the drug/metabolite transporter (DMT) superfamily. Small multidrug resistance (SMR) (TC 2.A.7.1) family. MdtJ subfamily. As to quaternary structure, forms a complex with MdtI.

The protein resides in the cell inner membrane. Functionally, catalyzes the excretion of spermidine. The protein is Spermidine export protein MdtJ of Citrobacter koseri (strain ATCC BAA-895 / CDC 4225-83 / SGSC4696).